The following is a 219-amino-acid chain: Proteasome subunit beta type-9 (219 aa).

The propeptide at 1-20 is removed in mature form; the sequence is MLRAGAPTAGSFRTKEVHTG. Residue Thr21 is the Nucleophile of the active site. Lys53 and Lys109 each carry N6-acetyllysine.

This sequence belongs to the peptidase T1B family. In terms of assembly, the 26S proteasome consists of a 20S proteasome core and two 19S regulatory subunits. The 20S proteasome core is composed of 28 subunits that are arranged in four stacked rings, resulting in a barrel-shaped structure. The two end rings are each formed by seven alpha subunits, and the two central rings are each formed by seven beta subunits. The catalytic chamber with the active sites is on the inside of the barrel. Component of the immunoproteasome, where it displaces the equivalent housekeeping subunit PSMB6. Component of the spermatoproteasome, a form of the proteasome specifically found in testis. In terms of processing, autocleaved. The resulting N-terminal Thr residue of the mature subunit is responsible for the nucleophile proteolytic activity.

It localises to the cytoplasm. Its subcellular location is the nucleus. It catalyses the reaction Cleavage of peptide bonds with very broad specificity.. Its function is as follows. The proteasome is a multicatalytic proteinase complex which is characterized by its ability to cleave peptides with Arg, Phe, Tyr, Leu, and Glu adjacent to the leaving group at neutral or slightly basic pH. The proteasome has an ATP-dependent proteolytic activity. This subunit is involved in antigen processing to generate class I binding peptides. This chain is Proteasome subunit beta type-9 (Psmb9), found in Mus platythrix (Flat-haired mouse).